The primary structure comprises 72 residues: Large ribosomal subunit protein bL31 (72 aa).

Residues C16, C18, C37, and C40 each coordinate Zn(2+).

It belongs to the bacterial ribosomal protein bL31 family. Type A subfamily. As to quaternary structure, part of the 50S ribosomal subunit. It depends on Zn(2+) as a cofactor.

Its function is as follows. Binds the 23S rRNA. In Idiomarina loihiensis (strain ATCC BAA-735 / DSM 15497 / L2-TR), this protein is Large ribosomal subunit protein bL31.